Consider the following 314-residue polypeptide: Aspartate carbamoyltransferase catalytic subunit (314 aa).

Carbamoyl phosphate is bound by residues arginine 53 and threonine 54. Residue lysine 82 participates in L-aspartate binding. Carbamoyl phosphate contacts are provided by arginine 103, histidine 131, and glutamine 134. Positions 164 and 230 each coordinate L-aspartate. Leucine 267 and proline 268 together coordinate carbamoyl phosphate.

Belongs to the aspartate/ornithine carbamoyltransferase superfamily. ATCase family. As to quaternary structure, heterooligomer of catalytic and regulatory chains.

The enzyme catalyses carbamoyl phosphate + L-aspartate = N-carbamoyl-L-aspartate + phosphate + H(+). Its pathway is pyrimidine metabolism; UMP biosynthesis via de novo pathway; (S)-dihydroorotate from bicarbonate: step 2/3. Its function is as follows. Catalyzes the condensation of carbamoyl phosphate and aspartate to form carbamoyl aspartate and inorganic phosphate, the committed step in the de novo pyrimidine nucleotide biosynthesis pathway. This is Aspartate carbamoyltransferase catalytic subunit from Methanococcus aeolicus (strain ATCC BAA-1280 / DSM 17508 / OCM 812 / Nankai-3).